Here is a 526-residue protein sequence, read N- to C-terminus: Na(+)/H(+) antiporter NhaB (526 aa).

A run of 11 helical transmembrane segments spans residues 25-45 (IIAFLIFNPILFMADPYIAGW), 52-72 (IFTLAMALKCYPLQPGGLLLI), 89-109 (IVVNIEVVLLLVFMVAGIYFM), 139-159 (AFLSAFLDALTVVAVIIAVGM), 204-224 (LMMHAAVGTALGGVMTMVGEP), 240-260 (FFVRMSPVTIPVFFAGIATTF), 305-325 (GFIGIWLVIGLAGHFAAVGLI), 355-375 (FTALLCVFFGVVAVIIDQGLF), 391-411 (LVMFYLANGALSMVSDNVFVG), 448-468 (VATPNGQAAFLFLLTSAIAPL), and 479-499 (MALPYTIVLTIVGLAATYFGL).

This sequence belongs to the NhaB Na(+)/H(+) (TC 2.A.34) antiporter family.

It localises to the cell inner membrane. The enzyme catalyses 2 Na(+)(in) + 3 H(+)(out) = 2 Na(+)(out) + 3 H(+)(in). In terms of biological role, na(+)/H(+) antiporter that extrudes sodium in exchange for external protons. This Pseudoalteromonas atlantica (strain T6c / ATCC BAA-1087) protein is Na(+)/H(+) antiporter NhaB.